A 93-amino-acid polypeptide reads, in one-letter code: MAHKKAGGSSRNGRDSAGRRLGVKKFGGESVIPGNIIIRQRGTKWHPGRNVGIGKDHTIFAKSEGVVEFRNGKNGRSFVSVVVPAEMPAKAAD.

Positions 1–22 (MAHKKAGGSSRNGRDSAGRRLG) are disordered.

This sequence belongs to the bacterial ribosomal protein bL27 family.

The polypeptide is Large ribosomal subunit protein bL27 (Parvibaculum lavamentivorans (strain DS-1 / DSM 13023 / NCIMB 13966)).